Reading from the N-terminus, the 289-residue chain is ATP synthase gamma chain (289 aa).

This sequence belongs to the ATPase gamma chain family. F-type ATPases have 2 components, CF(1) - the catalytic core - and CF(0) - the membrane proton channel. CF(1) has five subunits: alpha(3), beta(3), gamma(1), delta(1), epsilon(1). CF(0) has three main subunits: a, b and c.

It localises to the cell inner membrane. Its function is as follows. Produces ATP from ADP in the presence of a proton gradient across the membrane. The gamma chain is believed to be important in regulating ATPase activity and the flow of protons through the CF(0) complex. In Herminiimonas arsenicoxydans, this protein is ATP synthase gamma chain.